The sequence spans 314 residues: Tetraacyldisaccharide 4'-kinase (314 aa).

54–61 (YIGGTGKT) provides a ligand contact to ATP.

This sequence belongs to the LpxK family.

The enzyme catalyses a lipid A disaccharide + ATP = a lipid IVA + ADP + H(+). It participates in glycolipid biosynthesis; lipid IV(A) biosynthesis; lipid IV(A) from (3R)-3-hydroxytetradecanoyl-[acyl-carrier-protein] and UDP-N-acetyl-alpha-D-glucosamine: step 6/6. Functionally, transfers the gamma-phosphate of ATP to the 4'-position of a tetraacyldisaccharide 1-phosphate intermediate (termed DS-1-P) to form tetraacyldisaccharide 1,4'-bis-phosphate (lipid IVA). The sequence is that of Tetraacyldisaccharide 4'-kinase from Pelagibacter ubique (strain HTCC1062).